The sequence spans 202 residues: Matrix protein (202 aa).

The PPXY motif motif lies at 35–38 (PPEY). The tract at residues 115–151 (KIRRTLVFQWAESSGPLDGEELEYSQEITWDDDSEFV) is essential for glycoprotein binding.

It belongs to the lyssavirus matrix protein family. Homomultimer. Interacts with nucleoprotein and with the cytoplasmic domain of glycoprotein.

The protein localises to the virion membrane. Its subcellular location is the host endomembrane system. Plays a major role in assembly and budding of virion. Completely covers the ribonucleoprotein coil and keep it in condensed bullet-shaped form. Inhibits viral transcription and stimulates replication. Plays a major role in early induction of TRAIL-mediated apoptosis in infected neurons. This Irkut virus (IRKV) protein is Matrix protein (M).